The following is a 152-amino-acid chain: 3-hydroxyacyl-[acyl-carrier-protein] dehydratase FabZ (152 aa).

H58 is an active-site residue.

Belongs to the thioester dehydratase family. FabZ subfamily.

Its subcellular location is the cytoplasm. The catalysed reaction is a (3R)-hydroxyacyl-[ACP] = a (2E)-enoyl-[ACP] + H2O. Functionally, involved in unsaturated fatty acids biosynthesis. Catalyzes the dehydration of short chain beta-hydroxyacyl-ACPs and long chain saturated and unsaturated beta-hydroxyacyl-ACPs. This is 3-hydroxyacyl-[acyl-carrier-protein] dehydratase FabZ from Prochlorococcus marinus (strain MIT 9301).